The following is a 447-amino-acid chain: MQVKLFYTLALWAPILVSAQLSGSVGPLVDFKTKAKNKTCDITDYGAVADGKTDVGPAILDAWGNCSTGGLIYVPPGTYSLATDLELKHGESTAFQLDGVLARGHEGSYQLILVRNCHDCEFFSGNSQGAVQGYGYEYLQDGNYGERLFRFQDVSDFSVHGFAAIDSPAYYLVFDTVSNGEIYNLLVRGIADLGMTDAFDIWGQNVWIHDIEVTNGDECVTVKSPASDFLIENIYCNLSGGTAIGSLGTGTNISNIHYRNLYMNQADACYLKTHNGDGIVKNIVWENVIVHGGPYPLAVNEAWGKDVGSTGVQVQNLTFRNWYGENTANSRPAIRIECDEDVPCYDITLDNVNLWTEDGDYVEWSCANAYGSGACLQEAKDTGDLATYTTAVTVTATPSYSATHMPGDFTTNPPSTAPFTIPPMPTSFYPGATPISTLLSLSGAGGL.

The N-terminal stretch at 1–19 (MQVKLFYTLALWAPILVSA) is a signal peptide. N-linked (GlcNAc...) asparagine glycosylation is found at asparagine 37 and asparagine 65. Cysteines 40 and 66 form a disulfide. Catalysis depends on aspartate 217, which acts as the Proton donor. An intrachain disulfide couples cysteine 219 to cysteine 236. N-linked (GlcNAc...) asparagine glycosylation is found at asparagine 237 and asparagine 252. Histidine 291 is an active-site residue. Asparagine 316 carries an N-linked (GlcNAc...) asparagine glycan. Disulfide bonds link cysteine 338-cysteine 344 and cysteine 366-cysteine 375.

It belongs to the glycosyl hydrolase 28 family.

It localises to the secreted. Functionally, pectinolytic enzymes consist of four classes of enzymes: pectine lyase, polygalacturonase, pectin methylesterase and rhamnogalacturonase. Hydrolyzes alpha-D-galacturonopyranosyl-(1,2)-alpha-L-rhamnopyranosyl linkages in the backbone of the hairy regions of pectins. The protein is Probable rhamnogalacturonase C (rhgC) of Aspergillus flavus (strain ATCC 200026 / FGSC A1120 / IAM 13836 / NRRL 3357 / JCM 12722 / SRRC 167).